A 622-amino-acid chain; its full sequence is Iron transport multicopper oxidase fio1 (622 aa).

An N-terminal signal peptide occupies residues 1-22; sequence MNKFFSFPILGLLLTCVRFVVA. Residues 23–553 lie on the Extracellular side of the membrane; sequence KERLFEWNVT…GEMPAGWTSK (531 aa). N-linked (GlcNAc...) asparagine glycosylation is found at asparagine 30 and asparagine 79. Plastocyanin-like domains lie at 49-147 and 194-304; these read IGVN…FIIN and TGLF…LSYN. Positions 85 and 87 each coordinate Cu cation. Asparagine 117 and asparagine 123 each carry an N-linked (GlcNAc...) asparagine glycan. Cu cation is bound by residues histidine 129 and histidine 131. 8 N-linked (GlcNAc...) asparagine glycosylation sites follow: asparagine 198, asparagine 202, asparagine 234, asparagine 269, asparagine 296, asparagine 338, asparagine 360, and asparagine 376. The Plastocyanin-like 3 domain maps to 386 to 498; the sequence is EPVTYGPYTN…SGLLATFIEA (113 aa). Residues histidine 417, histidine 420, histidine 422, histidine 480, cysteine 481, histidine 482, and histidine 486 each contribute to the Cu cation site. N-linked (GlcNAc...) asparagine glycosylation is present at asparagine 532. The chain crosses the membrane as a helical span at residues 554–574; it reads AIGTMAACVISACIGMGSIIF. Residues 575-622 are Cytoplasmic-facing; the sequence is YGASIHPVPTEELDENDDLQEAALENAAMFLDTDKAVEKVVEGKDEIK.

Belongs to the multicopper oxidase family. The cofactor is Cu cation.

It localises to the cell membrane. Could be an iron transport multicopper oxidase, which is required for Fe(2+) high affinity uptake. May be required to oxidize Fe(2+) and release it from the transporter. Essential component of copper-dependent iron transport. This Schizosaccharomyces pombe (strain 972 / ATCC 24843) (Fission yeast) protein is Iron transport multicopper oxidase fio1 (fio1).